Here is a 212-residue protein sequence, read N- to C-terminus: Thymidylate kinase (212 aa).

11-18 (GPEGAGKT) lines the ATP pocket.

It belongs to the thymidylate kinase family.

It carries out the reaction dTMP + ATP = dTDP + ADP. In terms of biological role, phosphorylation of dTMP to form dTDP in both de novo and salvage pathways of dTTP synthesis. The polypeptide is Thymidylate kinase (Streptococcus pneumoniae serotype 19F (strain G54)).